Reading from the N-terminus, the 60-residue chain is MKAIIFLFAVLTVVAIIIPIISGEPNAGPHAASIDLNEIMKKMRPDLLKMLDDIKTKIQG.

An N-terminal signal peptide occupies residues 1–23; the sequence is MKAIIFLFAVLTVVAIIIPIISG. Positions 24–33 are excised as a propeptide; it reads EPNAGPHAAS. At Q59 the chain carries Glutamine amide.

The protein belongs to the formicidae venom clade 2 family. Expressed by the venom gland.

The protein resides in the secreted. Its function is as follows. Toxin that causes a rapid and irreversible paralysis when intrathoracically injected into insects (blowflies). Does not cause spontaneous nocifensive behaviors by intraplantar injection in mice. In Pogonomyrmex rugosus (Desert harvester ant), this protein is Myrmicitoxin(1)-Pr4a.